The primary structure comprises 259 residues: Uridylate kinase (259 aa).

21–24 lines the ATP pocket; sequence KLSG. A UMP-binding site is contributed by Gly-63. 2 residues coordinate ATP: Gly-64 and Arg-68. UMP-binding positions include Asp-83 and 144-151; that span reads TGNPYFTT. The ATP site is built by Thr-171, Phe-177, and Asp-180.

This sequence belongs to the UMP kinase family. In terms of assembly, homohexamer.

Its subcellular location is the cytoplasm. It carries out the reaction UMP + ATP = UDP + ADP. The protein operates within pyrimidine metabolism; CTP biosynthesis via de novo pathway; UDP from UMP (UMPK route): step 1/1. Inhibited by UTP. Catalyzes the reversible phosphorylation of UMP to UDP. This is Uridylate kinase from Salinibacter ruber (strain DSM 13855 / M31).